Consider the following 231-residue polypeptide: 7-cyano-7-deazaguanine synthase (231 aa).

8–18 (FSGGQDSTTCL) is a binding site for ATP. 4 residues coordinate Zn(2+): Cys-188, Cys-197, Cys-200, and Cys-203.

It belongs to the QueC family. Zn(2+) serves as cofactor.

It carries out the reaction 7-carboxy-7-deazaguanine + NH4(+) + ATP = 7-cyano-7-deazaguanine + ADP + phosphate + H2O + H(+). Its pathway is purine metabolism; 7-cyano-7-deazaguanine biosynthesis. In terms of biological role, catalyzes the ATP-dependent conversion of 7-carboxy-7-deazaguanine (CDG) to 7-cyano-7-deazaguanine (preQ(0)). The chain is 7-cyano-7-deazaguanine synthase from Pectobacterium carotovorum subsp. carotovorum (strain PC1).